Reading from the N-terminus, the 160-residue chain is SsrA-binding protein (160 aa).

The interval 131-160 is disordered; that stretch reads KKEYDKRDTERERDAGRELQRAVRNKGKED.

The protein belongs to the SmpB family.

It is found in the cytoplasm. In terms of biological role, required for rescue of stalled ribosomes mediated by trans-translation. Binds to transfer-messenger RNA (tmRNA), required for stable association of tmRNA with ribosomes. tmRNA and SmpB together mimic tRNA shape, replacing the anticodon stem-loop with SmpB. tmRNA is encoded by the ssrA gene; the 2 termini fold to resemble tRNA(Ala) and it encodes a 'tag peptide', a short internal open reading frame. During trans-translation Ala-aminoacylated tmRNA acts like a tRNA, entering the A-site of stalled ribosomes, displacing the stalled mRNA. The ribosome then switches to translate the ORF on the tmRNA; the nascent peptide is terminated with the 'tag peptide' encoded by the tmRNA and targeted for degradation. The ribosome is freed to recommence translation, which seems to be the essential function of trans-translation. This Pseudomonas fluorescens (strain Pf0-1) protein is SsrA-binding protein.